We begin with the raw amino-acid sequence, 180 residues long: MTTKYNAGIHHRRSIRLKHYNYRSEGFYFITICCKNKECLFGHIINQQMQLNDLGNYVKQCWENIPMFFPQVRIDEFVIMPNHLHGIIEIIEQVKGKCNLPLQLRATQLPQKGTSQTIGSIVRRFKAGVTSWARKNSEIFDVWQRNYYEHIIRDEKSYLQIYEYIQNNPILWEQDQLYVD.

This is an uncharacterized protein from Haemophilus influenzae (strain ATCC 51907 / DSM 11121 / KW20 / Rd).